Here is a 383-residue protein sequence, read N- to C-terminus: GDSL esterase/lipase At1g28610 (383 aa).

The signal sequence occupies residues 1-22 (MASLDSLVSFFLSTLFVTIVSS). Catalysis depends on S38, which acts as the Nucleophile. 3 N-linked (GlcNAc...) asparagine glycosylation sites follow: N134, N184, and N315. Active-site residues include D340 and H343.

Belongs to the 'GDSL' lipolytic enzyme family.

The protein resides in the secreted. The protein is GDSL esterase/lipase At1g28610 of Arabidopsis thaliana (Mouse-ear cress).